The primary structure comprises 1713 residues: uncharacterized protein (1713 aa).

Over residues 1–12 the composition is skewed to polar residues; the sequence is MNENEFSTNSLI. Disordered stretches follow at residues 1 to 35, 79 to 200, 226 to 290, 309 to 557, 713 to 734, 808 to 952, and 1143 to 1190; these read MNEN…INFG, QQLN…KLSN, GNNN…QPLS, QYLS…PMSH, SNDQ…KKDR, SPPM…SITT, and HHHH…SISR. 5 stretches are compositionally biased toward low complexity: residues 13–35, 79–109, 126–170, 177–200, and 226–264; these read NQQG…INFG, QQLN…NNNN, NNSG…NSGN, NMSD…KLSN, and GNNN…GGNN. Residues 265 to 276 show a composition bias toward basic residues; the sequence is SHHHHNHSHHNS. Composition is skewed to low complexity over residues 317-470 and 478-489; these read NNIN…SPAS and SNNFGGNHNNYN. Basic residues predominate over residues 490–504; sequence HAHHSHHNNHAHHNT. Positions 505–553 are enriched in low complexity; sequence HNYNNNNNNNNNNNNNNNNNNNNSNNSNNNSNTNNNGNNGNNSNNNNNH. The segment at residues 544 to 825 is a DNA-binding region (NDT80); it reads GNNSNNNNNH…QNPGRFLNHD (282 aa). Over residues 822 to 832 the composition is skewed to basic and acidic residues; that stretch reads LNHDKSLKKDP. Residues 838–874 show a composition bias toward gly residues; sequence GGKGGGGSGSGGMGGGMGGGMGNNGSSGSSSNGGYGN. Low complexity-rich tracts occupy residues 898-946 and 1148-1189; these read SPTT…PTLT and QQQQ…SSIS. The 116-residue stretch at 1240 to 1355 folds into the Peptidase S74 domain; it reads SDQRIKSNIR…RSLKKEKDHI (116 aa). The next 3 membrane-spanning stretches (helical) occupy residues 1416-1436, 1447-1467, and 1473-1493; these read TMFV…FYLF, LMNF…TFYV, and LIIA…VGFF. A compositionally biased stretch (low complexity) spans 1596–1605; it reads NSNNNINNNN. Disordered regions lie at residues 1596–1634 and 1646–1665; these read NSNN…DFHE and IKGK…SSSN. Positions 1617 to 1634 are enriched in basic and acidic residues; sequence FIDDFKKSSSNNHKDFHE.

Its subcellular location is the membrane. This is an uncharacterized protein from Dictyostelium discoideum (Social amoeba).